We begin with the raw amino-acid sequence, 81 residues long: MRKDIHPKNNLVVFKDGSNGAMFLTKSTLNSKETIKYIDGKEYPLVTVEITSKSHPFYTGQQKFVDAAGRIDKFNKRYKKS.

Belongs to the bacterial ribosomal protein bL31 family. Type B subfamily. Part of the 50S ribosomal subunit.

This is Large ribosomal subunit protein bL31B from Borreliella burgdorferi (strain ATCC 35210 / DSM 4680 / CIP 102532 / B31) (Borrelia burgdorferi).